Consider the following 674-residue polypeptide: Anosmin-1 (674 aa).

The first 21 residues, 1-21 (MVRRAPGASLALLLWVTAVSC), serve as a signal peptide directing secretion. Cystine bridges form between C47–C71, C80–C99, C84–C95, and C110–C114. Residue N65 is glycosylated (N-linked (GlcNAc...) asparagine). One can recognise a WAP domain in the interval 121 to 170 (LSVKQGDCPAPEKASGFAAACFESCEADSECSGVKKCCSNGCGHTCQVPK). 4 Fibronectin type-III domains span residues 180 to 281 (PRKE…SKDP), 286 to 392 (APSN…TTQD), 418 to 515 (RRKP…FFVT), and 545 to 652 (KPEN…DLPP). Residues N203 and N294 are each glycosylated (N-linked (GlcNAc...) asparagine). Positions 388–402 (STTQDNRNNNEQTSV) are enriched in polar residues. Residues 388 to 413 (STTQDNRNNNEQTSVEKPPKGVVDPY) form a disordered region. 3 N-linked (GlcNAc...) asparagine glycosylation sites follow: N465, N548, and N559. The tract at residues 655–674 (PHRPHLKHHPHRYKPPPEKY) is disordered. Positions 656–668 (HRPHLKHHPHRYK) are enriched in basic residues.

It is found in the cell surface. Functionally, may be an adhesion-like molecule with anti-protease activity. The polypeptide is Anosmin-1 (Coturnix japonica (Japanese quail)).